We begin with the raw amino-acid sequence, 311 residues long: DNA-directed RNA polymerase subunit alpha (311 aa).

Residues 1–227 (MAQFQIECVE…NLFCSLRNLD (227 aa)) are alpha N-terminal domain (alpha-NTD). Positions 242-311 (ISQVLIEELQ…GISLPKEKTD (70 aa)) are alpha C-terminal domain (alpha-CTD).

It belongs to the RNA polymerase alpha chain family. As to quaternary structure, in plastids the minimal PEP RNA polymerase catalytic core is composed of four subunits: alpha, beta, beta', and beta''. When a (nuclear-encoded) sigma factor is associated with the core the holoenzyme is formed, which can initiate transcription.

The protein localises to the plastid. The protein resides in the chloroplast. It catalyses the reaction RNA(n) + a ribonucleoside 5'-triphosphate = RNA(n+1) + diphosphate. DNA-dependent RNA polymerase catalyzes the transcription of DNA into RNA using the four ribonucleoside triphosphates as substrates. The sequence is that of DNA-directed RNA polymerase subunit alpha from Porphyra purpurea (Red seaweed).